Consider the following 481-residue polypeptide: Pre-mRNA-splicing factor sap114 (481 aa).

The span at 1-15 (MSSLMEFQDRNTTNN) shows a compositional bias: polar residues. The interval 1-34 (MSSLMEFQDRNTTNNETEHQKSITDQSSSVPAGV) is disordered. SURP motif repeat units follow at residues 44-86 (IIDK…HPYY) and 147-189 (VLRL…YPYF). 2 disordered regions span residues 335-373 (PSLA…QKPV) and 452-481 (GVEI…NKRR). 2 stretches are compositionally biased toward polar residues: residues 345 to 368 (ISST…TQPK) and 467 to 481 (ATQS…NKRR).

Belongs to the 40S cdc5-associated complex (or cwf complex), a spliceosome sub-complex reminiscent of a late-stage spliceosome composed of the U2, U5 and U6 snRNAs and at least brr2, cdc5, cwf2/prp3, cwf3/syf1, cwf4/syf3, cwf5/ecm2, spp42/cwf6, cwf7/spf27, cwf8, cwf9, cwf10, cwf11, cwf12, prp45/cwf13, cwf14, cwf15, cwf16, cwf17, cwf18, cwf19, cwf20, cwf21, cwf22, cwf23, cwf24, cwf25, cwf26, cyp7/cwf27, cwf28, cwf29/ist3, lea1, msl1, prp5/cwf1, prp10, prp12/sap130, prp17, prp22, sap61, sap62, sap114, sap145, slu7, smb1, smd1, smd3, smf1, smg1 and syf2.

It localises to the nucleus. Functionally, involved in pre-mRNA splicing. May be involved in endoplasmic reticulum-associated protein degradation (ERAD) and required for growth at low and high temperatures. The sequence is that of Pre-mRNA-splicing factor sap114 (sap114) from Schizosaccharomyces pombe (strain 972 / ATCC 24843) (Fission yeast).